A 140-amino-acid chain; its full sequence is Cytochrome c-type biogenesis protein CcmE (140 aa).

The Cytoplasmic segment spans residues 1 to 7 (MKRKHKR). Residues 8–28 (LLFVLASFCAAGCALLFILSE) traverse the membrane as a helical; Signal-anchor for type II membrane protein segment. At 29 to 140 (LRESVSFFYT…TAPKSSPEPK (112 aa)) the chain is on the periplasmic side. Heme contacts are provided by H121 and Y125.

The protein belongs to the CcmE/CycJ family.

The protein resides in the cell inner membrane. Heme chaperone required for the biogenesis of c-type cytochromes. Transiently binds heme delivered by CcmC and transfers the heme to apo-cytochromes in a process facilitated by CcmF and CcmH. The polypeptide is Cytochrome c-type biogenesis protein CcmE (Anaplasma marginale (strain St. Maries)).